The following is a 202-amino-acid chain: Heart- and neural crest derivatives-expressed protein 1 (202 aa).

In terms of domain architecture, bHLH spans 83–135 (RKGVGGPKKERRRTESINSAFAELRECIPNVPADTKLSKIKTLRLATSYIAYL). The tract at residues 143 to 187 (SQPGEPEGFKAELKKADGRENKRKRETQPEVYSQPLAHGEKKLKG) is disordered. Residues 149–162 (EGFKAELKKADGRE) are compositionally biased toward basic and acidic residues.

Efficient DNA binding requires dimerization with another bHLH protein.

The protein localises to the nucleus. It localises to the nucleoplasm. Its subcellular location is the nucleolus. Functionally, transcription factor. Plays an essential role in cardiac morphogenesis. The polypeptide is Heart- and neural crest derivatives-expressed protein 1 (HAND1) (Gallus gallus (Chicken)).